A 144-amino-acid chain; its full sequence is MIGLIQRVKSANVRVEQQIVGQIEQGLLVLLGVKQGDDQSKADKLLQKVLNYRVFADQQGKMNLNVQQAGGSLLIVSQFTLAADTQKGLRPSFSRGASPADAKALYDYFHQQAALHIHTETGQFAADMQVSLQNDGPVTFWLQV.

Positions 136–137 (GP) match the Gly-cisPro motif, important for rejection of L-amino acids motif.

This sequence belongs to the DTD family. Homodimer.

It localises to the cytoplasm. It catalyses the reaction glycyl-tRNA(Ala) + H2O = tRNA(Ala) + glycine + H(+). The catalysed reaction is a D-aminoacyl-tRNA + H2O = a tRNA + a D-alpha-amino acid + H(+). An aminoacyl-tRNA editing enzyme that deacylates mischarged D-aminoacyl-tRNAs. Also deacylates mischarged glycyl-tRNA(Ala), protecting cells against glycine mischarging by AlaRS. Acts via tRNA-based rather than protein-based catalysis; rejects L-amino acids rather than detecting D-amino acids in the active site. By recycling D-aminoacyl-tRNA to D-amino acids and free tRNA molecules, this enzyme counteracts the toxicity associated with the formation of D-aminoacyl-tRNA entities in vivo and helps enforce protein L-homochirality. This chain is D-aminoacyl-tRNA deacylase, found in Haemophilus ducreyi (strain 35000HP / ATCC 700724).